A 238-amino-acid polypeptide reads, in one-letter code: Tetrahydromethanopterin S-methyltransferase subunit A 1 (238 aa).

Residues 2–218 (VEKKSPAEGW…RMFAGMYSGK (217 aa)) are Cytoplasmic-facing. Residue H84 coordinates 5-hydroxybenzimidazolylcob(I)amide. A helical transmembrane segment spans residues 219 to 237 (VQGIMIGLAFTLTLGILLL). Position 238 (V238) is a topological domain, extracellular.

This sequence belongs to the MtrA family. As to quaternary structure, the complex is composed of 8 subunits; MtrA, MtrB, MtrC, MtrD, MtrE, MtrF, MtrG and MtrH. Requires 5-hydroxybenzimidazolylcob(I)amide as cofactor.

It localises to the cell membrane. The catalysed reaction is 5-methyl-5,6,7,8-tetrahydromethanopterin + coenzyme M + 2 Na(+)(in) = 5,6,7,8-tetrahydromethanopterin + methyl-coenzyme M + 2 Na(+)(out). It participates in one-carbon metabolism; methanogenesis from CO(2); methyl-coenzyme M from 5,10-methylene-5,6,7,8-tetrahydromethanopterin: step 2/2. Part of a complex that catalyzes the formation of methyl-coenzyme M and tetrahydromethanopterin from coenzyme M and methyl-tetrahydromethanopterin. This is an energy-conserving, sodium-ion translocating step. The protein is Tetrahydromethanopterin S-methyltransferase subunit A 1 of Methanothermobacter marburgensis (strain ATCC BAA-927 / DSM 2133 / JCM 14651 / NBRC 100331 / OCM 82 / Marburg) (Methanobacterium thermoautotrophicum).